The following is a 245-amino-acid chain: Rhamnosyl O-methyltransferase (245 aa).

The signal sequence occupies residues 1–38 (MGLVWRSRTSLVGQLIGLVRLVASFAAQLFYRPSDAVA).

Belongs to the rhamnosyl O-methyltransferase family.

Functionally, catalyzes the O-methylation of the hydroxyl group located on C-2 of the first rhamnosyl residue linked to the phenolic group of glycosylated phenolphthiocerol dimycocerosates (PGL) and p-hydroxybenzoic acid derivatives (p-HBAD). The protein is Rhamnosyl O-methyltransferase of Mycobacterium bovis (strain ATCC BAA-935 / AF2122/97).